We begin with the raw amino-acid sequence, 610 residues long: Glutamine--fructose-6-phosphate aminotransferase [isomerizing] (610 aa).

Catalysis depends on C2, which acts as the Nucleophile; for GATase activity. The Glutamine amidotransferase type-2 domain occupies 2-218; that stretch reads CGIVGAVAQR…EGDVAEITRH (217 aa). SIS domains lie at 286–426 and 459–600; these read AADI…LKGR and LSED…VDQP. Catalysis depends on K605, which acts as the For Fru-6P isomerization activity.

In terms of assembly, homodimer.

It is found in the cytoplasm. It carries out the reaction D-fructose 6-phosphate + L-glutamine = D-glucosamine 6-phosphate + L-glutamate. Its function is as follows. Catalyzes the first step in hexosamine metabolism, converting fructose-6P into glucosamine-6P using glutamine as a nitrogen source. The chain is Glutamine--fructose-6-phosphate aminotransferase [isomerizing] from Haemophilus ducreyi (strain 35000HP / ATCC 700724).